A 117-amino-acid polypeptide reads, in one-letter code: EVKLLESGGGLVQPGGSLKLSCAASGFDFSGYWMSWVRQAPGKGLEWIGEINPDSSTINYTPFLKDKFIISRDNAKNTLFLQMSKVRSEDTALYFCARNWDVGFDYWGQVTTLTVSS.

One can recognise an Ig-like domain in the interval 1–116; that stretch reads EVKLLESGGG…WGQVTTLTVS (116 aa).

The chain is Ig heavy chain V region UPC10 from Mus musculus (Mouse).